The following is a 92-amino-acid chain: MNKNYSYPLDLSWSTEELASVLSFFNNVEAAYEQKVQAEKLLKSYEAFKQVVPSKGQEKRIGREFENVSGYSLYHAVQEAKSKGKGSISLGK.

It belongs to the UPF0223 family.

The sequence is that of UPF0223 protein SSA_0938 from Streptococcus sanguinis (strain SK36).